The chain runs to 542 residues: Amino-acid acetyltransferase, mitochondrial (542 aa).

A mitochondrion-targeting transit peptide spans 1 to 14; the sequence is MLFRRLLTTKVGYH. Residues 368–534 form the N-acetyltransferase domain; it reads AGSAQLPAHK…LREYITYVRD (167 aa).

The protein belongs to the acetyltransferase family.

The protein localises to the mitochondrion. It carries out the reaction L-glutamate + acetyl-CoA = N-acetyl-L-glutamate + CoA + H(+). It functions in the pathway amino-acid biosynthesis; L-arginine biosynthesis; N(2)-acetyl-L-ornithine from L-glutamate: step 1/4. N-acetylglutamate synthase involved in arginine biosynthesis. The protein is Amino-acid acetyltransferase, mitochondrial (ARG2) of Eremothecium gossypii (strain ATCC 10895 / CBS 109.51 / FGSC 9923 / NRRL Y-1056) (Yeast).